Reading from the N-terminus, the 143-residue chain is Host transcription reprogramming factor 8 (143 aa).

A signal peptide spans 1–19; that stretch reads MHTYKFIQIALLFASVALA. Pro residues predominate over residues 24–34; the sequence is PSPPNPPPVPQ. The disordered stretch occupies residues 24-43; that stretch reads PSPPNPPPVPQLPNSETKSN. A C2H2-type 1 zinc finger spans residues 48–71; that stretch reads HSCEFCGVVKPSGPAYLEHYHQNH. Residues 77-99 form a disordered region; sequence GKLATPSPPNPPPVPTQKVETHA. A compositionally biased stretch (pro residues) spans 82-91; that stretch reads PSPPNPPPVP. The C2H2-type 2 zinc finger occupies 103–126; it reads HGCEWCNKVEPSGPAYIKHYKENH.

Its subcellular location is the secreted. It localises to the host nucleus. In terms of biological role, probable secreted effector that translocates into the nuclei of host cells to reprogram the expression of targeted genes by binding on effector binding elements in rice. This Pyricularia oryzae (strain 70-15 / ATCC MYA-4617 / FGSC 8958) (Rice blast fungus) protein is Host transcription reprogramming factor 8.